Here is a 49-residue protein sequence, read N- to C-terminus: Putative DNA-directed RNA polymerase subunit omega (49 aa).

The protein belongs to the RNA polymerase subunit omega family.

It is found in the plastid. The protein localises to the chloroplast. The catalysed reaction is RNA(n) + a ribonucleoside 5'-triphosphate = RNA(n+1) + diphosphate. May be involved in RNA polymerase activity. This Cyanidioschyzon merolae (strain NIES-3377 / 10D) (Unicellular red alga) protein is Putative DNA-directed RNA polymerase subunit omega (rpoZ).